Reading from the N-terminus, the 225-residue chain is Cytidylate kinase (225 aa).

Residue 12–20 (GPSGAGKGT) coordinates ATP.

Belongs to the cytidylate kinase family. Type 1 subfamily.

The protein localises to the cytoplasm. It catalyses the reaction CMP + ATP = CDP + ADP. The enzyme catalyses dCMP + ATP = dCDP + ADP. The sequence is that of Cytidylate kinase from Vibrio cholerae serotype O1 (strain ATCC 39315 / El Tor Inaba N16961).